The sequence spans 393 residues: Probable alpha-1,6-mannosyltransferase MNN10 (393 aa).

Over 1–52 the chain is Cytoplasmic; sequence MSSVPYNSQLPISNHLEYDEDEKKSRGSKLGLKYKMIYWRKTLCSSLARWRK. The chain crosses the membrane as a helical; Signal-anchor for type II membrane protein span at residues 53–73; that stretch reads LILLISLALFLFIWISDSTIS. The Lumenal segment spans residues 74-393; that stretch reads RNPSTTSFQG…RKWYTRFFFP (320 aa). The tract at residues 77–97 is disordered; that stretch reads STTSFQGQNSNDNKLSNTGSS.

Belongs to the glycosyltransferase 34 family. In terms of assembly, component of the M-Pol II complex composed of ANP1, MNN9, MNN10, MNN11 and HOC1.

It localises to the endoplasmic reticulum membrane. The protein localises to the golgi apparatus. Its subcellular location is the cis-Golgi network membrane. In terms of biological role, required for polarized growth and efficient budding. Functionally, the M-Pol II complex possesses alpha-1,6-mannosyltransferase activity and is probably involved in the elongation of the mannan backbone of N-linked glycans on cell wall and periplasmic proteins. The sequence is that of Probable alpha-1,6-mannosyltransferase MNN10 (MNN10) from Saccharomyces cerevisiae (strain ATCC 204508 / S288c) (Baker's yeast).